Consider the following 86-residue polypeptide: Large ribosomal subunit protein eL43 (86 aa).

Residues cysteine 40, cysteine 43, cysteine 58, and cysteine 61 each coordinate Zn(2+). A C4-type zinc finger spans residues 40 to 61 (CPFCRSKAVIREAYGIYRCKKC).

The protein belongs to the eukaryotic ribosomal protein eL43 family. Putative zinc-binding subfamily. Part of the 50S ribosomal subunit. It depends on Zn(2+) as a cofactor.

In terms of biological role, binds to the 23S rRNA. The polypeptide is Large ribosomal subunit protein eL43 (Nanoarchaeum equitans (strain Kin4-M)).